A 196-amino-acid chain; its full sequence is Nucleotide kinase gp1.7 (196 aa).

Residues 97–118 (PRKPHLNKPEVTPTDDQPSAET) are disordered.

As to quaternary structure, dodecamer.

The catalysed reaction is dGMP + ATP = dGDP + ADP. It carries out the reaction dTMP + ATP = dTDP + ADP. Nucleotide kinase that catalyzes the phosphorylation of dGMP and dTMP to dGDP and dTDP. A double mutation in this protein and the RecBCD inhibitor gp5.9 protein allow phage to overcome the retron Ec48 bacteriophage defense system. This protein alone when overexpressed in E.coli does not cause growth arrest; Y128C may be a silent mutation. This Escherichia coli (Bacteriophage T7) protein is Nucleotide kinase gp1.7.